Reading from the N-terminus, the 155-residue chain is Pathogenesis-related protein STH-21 (155 aa).

The protein belongs to the BetVI family.

The protein is Pathogenesis-related protein STH-21 (STH-21) of Solanum tuberosum (Potato).